Consider the following 314-residue polypeptide: 2,3-dihydroxyphenylpropionate/2,3-dihydroxicinnamic acid 1,2-dioxygenase (314 aa).

Histidine 115 (proton donor) is an active-site residue. Histidine 179 acts as the Proton acceptor in catalysis.

The protein belongs to the LigB/MhpB extradiol dioxygenase family. As to quaternary structure, homotetramer. It depends on Fe(2+) as a cofactor.

It catalyses the reaction 3-(2,3-dihydroxyphenyl)propanoate + O2 = (2Z,4E)-2-hydroxy-6-oxonona-2,4-dienedioate + H(+). It carries out the reaction (2E)-3-(2,3-dihydroxyphenyl)prop-2-enoate + O2 = (2Z,4E,7E)-2-hydroxy-6-oxonona-2,4,7-trienedioate + H(+). The protein operates within aromatic compound metabolism; 3-phenylpropanoate degradation. Catalyzes the non-heme iron(II)-dependent oxidative cleavage of 2,3-dihydroxyphenylpropionic acid and 2,3-dihydroxicinnamic acid into 2-hydroxy-6-ketononadienedioate and 2-hydroxy-6-ketononatrienedioate, respectively. The protein is 2,3-dihydroxyphenylpropionate/2,3-dihydroxicinnamic acid 1,2-dioxygenase of Klebsiella pneumoniae (strain 342).